The following is a 192-amino-acid chain: UPF0312 protein plu2095 (192 aa).

An N-terminal signal peptide occupies residues 1–23; that stretch reads MLKKTLLGLTAGALLLNASSALA.

Belongs to the UPF0312 family. Type 1 subfamily.

It localises to the periplasm. The chain is UPF0312 protein plu2095 from Photorhabdus laumondii subsp. laumondii (strain DSM 15139 / CIP 105565 / TT01) (Photorhabdus luminescens subsp. laumondii).